The primary structure comprises 295 residues: MSKSNKLCRKTSCPRSNIFCNLLDKIVKRPSLQFLGQWGYHCYEPRIYRSLAKILRYVDLDGFDALLTDYIAFVEKSRYRFEVSFNLDFTEICVNTILYWVFARKGNPDFVELLLKKTKDYVQDRSCNLALIWRTFTPVYCPSPLSGITPLFYVAQTRQSNIFKILLQYGILEREKNPINIVLTIVLYPSRVRVMVDRELADIHEDAKTCLVLCSRVLSVISVKEIKTQLSLGRRPIISNWFDYIPSTRYKDPCELLHLCRLTIRNQLLTNNMLPDGIFSLLIPARLQNYLNLEI.

Residues 146–176 (SGITPLFYVAQTRQSNIFKILLQYGILEREK) form an ANK repeat. One can recognise an SOCS box domain in the interval 232-295 (LGRRPIISNW…RLQNYLNLEI (64 aa)).

Belongs to the ankyrin SOCS box (ASB) family.

It participates in protein modification; protein ubiquitination. May be a substrate-recognition component of a SCF-like ECS (Elongin-Cullin-SOCS-box protein) E3 ubiquitin-protein ligase complex which mediates the ubiquitination and subsequent proteasomal degradation of target proteins. This Macaca fascicularis (Crab-eating macaque) protein is Ankyrin repeat and SOCS box protein 17 (ASB17).